A 39-amino-acid polypeptide reads, in one-letter code: Large ribosomal subunit protein bL36 (39 aa).

The protein belongs to the bacterial ribosomal protein bL36 family.

The sequence is that of Large ribosomal subunit protein bL36 from Oenococcus oeni (strain ATCC BAA-331 / PSU-1).